The following is a 279-amino-acid chain: Small ribosomal subunit protein uS2 (279 aa).

The tract at residues 232 to 260 (KVDMEAAGENAPKGAGKKKNTKARMDKAE) is disordered.

The protein belongs to the universal ribosomal protein uS2 family.

This Phocaeicola vulgatus (strain ATCC 8482 / DSM 1447 / JCM 5826 / CCUG 4940 / NBRC 14291 / NCTC 11154) (Bacteroides vulgatus) protein is Small ribosomal subunit protein uS2.